Here is a 375-residue protein sequence, read N- to C-terminus: Succinyl-diaminopimelate desuccinylase (375 aa).

A Zn(2+)-binding site is contributed by His-66. Residue Asp-68 is part of the active site. A Zn(2+)-binding site is contributed by Asp-99. The active-site Proton acceptor is Glu-133. The Zn(2+) site is built by Glu-134, Glu-162, and His-348.

Belongs to the peptidase M20A family. DapE subfamily. Homodimer. Zn(2+) is required as a cofactor. Requires Co(2+) as cofactor.

The enzyme catalyses N-succinyl-(2S,6S)-2,6-diaminopimelate + H2O = (2S,6S)-2,6-diaminopimelate + succinate. It functions in the pathway amino-acid biosynthesis; L-lysine biosynthesis via DAP pathway; LL-2,6-diaminopimelate from (S)-tetrahydrodipicolinate (succinylase route): step 3/3. Catalyzes the hydrolysis of N-succinyl-L,L-diaminopimelic acid (SDAP), forming succinate and LL-2,6-diaminopimelate (DAP), an intermediate involved in the bacterial biosynthesis of lysine and meso-diaminopimelic acid, an essential component of bacterial cell walls. This chain is Succinyl-diaminopimelate desuccinylase, found in Shigella sonnei (strain Ss046).